The following is a 444-amino-acid chain: MSYKMFGRCRTACFRSPNLFAANKGMPLQASVAGGASRYIIGTASVLVGAMAGFYIMNSRSAIHEYVSCPLVRLVTPDAEDGHKLGIWFLKYGLAPKLMFDKDDPVLKVEVFGKTMSNPIGCAAGLDKDGEAIDGIAQSGFGYVEIGTVTPLAQPGNPKPRFFRLPMDEAVINRYGFNSSGHKKVYDNVLSRVRQFLGAYFRDDTVNSLALYKDKLLGINLGKNKNGDEVEDYLRGVEKFQSLADVLVINVSSPNTPGLRDLQQEGRLTELLSMIVAKRNSLINEGNVLGASTHKPPVLVKIAPDLTEPELQSIAEAAKKSSIDGIIVSNTTIQRPDSLYTVDEELKNQAGGLSGKPVKPFALKALRTIHQYTKDTNLVLVGCGGISSGQDAIEFAKAGAHFVQLYTAYAYRGPGLIARIKDEVTEELRNEGKTWMEIIGQDAK.

Residues 34 to 56 (GGASRYIIGTASVLVGAMAGFYI) form a helical membrane-spanning segment. FMN is bound by residues 124–128 (AGLDK) and T148. K128 is a binding site for substrate. 173 to 177 (NRYGF) provides a ligand contact to substrate. Residues N220 and N250 each contribute to the FMN site. 250 to 255 (NVSSPN) contacts substrate. S253 functions as the Nucleophile in the catalytic mechanism. Residues K301 and S329 each contribute to the FMN site. 330-331 (NT) contacts substrate. Residues G355, G385, and 406–407 (YT) each bind FMN.

The protein belongs to the dihydroorotate dehydrogenase family. Type 2 subfamily. It depends on FMN as a cofactor.

It localises to the mitochondrion inner membrane. The catalysed reaction is (S)-dihydroorotate + a quinone = orotate + a quinol. Its pathway is pyrimidine metabolism; UMP biosynthesis via de novo pathway; orotate from (S)-dihydroorotate (quinone route): step 1/1. Functionally, catalyzes the conversion of dihydroorotate to orotate with quinone as electron acceptor. The protein is Dihydroorotate dehydrogenase (quinone), mitochondrial (URA9) of Eremothecium gossypii (strain ATCC 10895 / CBS 109.51 / FGSC 9923 / NRRL Y-1056) (Yeast).